A 1237-amino-acid chain; its full sequence is Zinc finger protein ZFAT (1237 aa).

The C2H2-type 1 zinc-finger motif lies at 12–35 (FMCKCCNLFSPNQSELVTHVSEKH). Positions 50-110 (RPLNTPENPN…GPLATEEGSR (61 aa)) are disordered. The segment covering 70–81 (MKRKRGRPKGST) has biased composition (basic residues). The segment at 116–141 (LECSKCCRKFSNTRQLRKHICIIVLN) adopts a C2H2-type 2; degenerate zinc-finger fold. The disordered stretch occupies residues 147-188 (GDAGNESDLDLEKTYKEDDREKASKRPRAQKTEKVQKISGKE). Positions 156–186 (DLEKTYKEDDREKASKRPRAQKTEKVQKISG) are enriched in basic and acidic residues. C2H2-type zinc fingers lie at residues 271 to 293 (FTCEYCNKVFKFKHSLQAHLRIH), 299 to 321 (YKCSQCSYASAIKANLNVHLRKH), 326 to 349 (FACDYCSFTCLSKGHLKVHIERVH), 354 to 377 (QHCRFCKKKYSDVKNLIKHIRDMH), 404 to 426 (YDCHICERKFKNELDRDRHMLVH), 432 to 454 (FACELCGHGATKYQALELHVRKH), and 458 to 481 (YVCALCLKKFVSSIRLRSHIREVH). Zn(2+) contacts are provided by cysteine 273, cysteine 276, histidine 289, histidine 293, cysteine 301, cysteine 304, histidine 317, histidine 321, cysteine 328, cysteine 331, histidine 344, histidine 349, cysteine 356, cysteine 359, histidine 372, histidine 377, cysteine 406, cysteine 409, histidine 422, and histidine 426. Cysteine 460, cysteine 463, histidine 476, and histidine 481 together coordinate Zn(2+). Disordered regions lie at residues 551-576 (VPGDAHAPPPGPLATPQSESSSLSPC) and 601-671 (SDTS…CLRA). The span at 565–574 (TPQSESSSLS) shows a compositional bias: polar residues. Low complexity predominate over residues 601–617 (SDTSSAEPPAAAEATSD). C2H2-type zinc fingers lie at residues 737–759 (LECEYCGKLFWYQVHFDMHVRTH), 765–788 (YYCSQCHYSSITKNCLKRHVIQKH), 793–817 (LKCPTDGCDYSTPDKYKLQAHLKVH), and 825–848 (YSCPVCEKSFSEDRLIKSHIKTNH). 24 residues coordinate Zn(2+): cysteine 767, cysteine 770, histidine 783, histidine 788, cysteine 795, cysteine 800, histidine 813, histidine 817, cysteine 827, cysteine 830, histidine 843, histidine 848, cysteine 877, cysteine 880, histidine 894, histidine 898, cysteine 906, cysteine 909, histidine 922, histidine 926, cysteine 934, cysteine 937, histidine 950, and leucine 953. A C2H2-type 14; degenerate zinc finger spans residues 875 to 898 (MKCPYCDFYFMKNGSDLQRHIWAH). 5 consecutive C2H2-type zinc fingers follow at residues 904-926 (FKCSLCEYATRSKSNLKAHMNRH), 932-954 (HLCDMCGKKFKSKGTLKSHKLLH), 961-983 (FKCTVCDYTAAQKPQLLRHMEQH), 989-1012 (FRCAHCHYSCNISGSLKRHYNRKH), and 1036-1059 (LKCPVCSFVYGTKWEFNRHLKNKH).

Detected in spleen and thymus but not in liver, muscle, heart, kidney, brain, bone marrow or pancreas. Expressed in CD19+, CD4+ and CD8+ lymphocytes but not in CD11b+ lymphocytes or peritoneal macrophages (at protein level).

The protein localises to the nucleus. The protein resides in the cytoplasm. Its subcellular location is the cytosol. May be involved in transcriptional regulation. Overexpression causes down-regulation of a number of genes involved in the immune response. Some genes are also up-regulated. The chain is Zinc finger protein ZFAT (Zfat) from Mus musculus (Mouse).